Reading from the N-terminus, the 463-residue chain is Glutamate--tRNA ligase 1 (463 aa).

A 'HIGH' region motif is present at residues 10–20 (PSPTGYLHIGG). Positions 238 to 242 (KLSKR) match the 'KMSKS' region motif. Position 241 (K241) interacts with ATP.

The protein belongs to the class-I aminoacyl-tRNA synthetase family. Glutamate--tRNA ligase type 1 subfamily. Monomer.

It is found in the cytoplasm. The catalysed reaction is tRNA(Glu) + L-glutamate + ATP = L-glutamyl-tRNA(Glu) + AMP + diphosphate. Functionally, catalyzes the attachment of glutamate to tRNA(Glu) in a two-step reaction: glutamate is first activated by ATP to form Glu-AMP and then transferred to the acceptor end of tRNA(Glu). The protein is Glutamate--tRNA ligase 1 of Helicobacter pylori (strain HPAG1).